The primary structure comprises 122 residues: Large ribosomal subunit protein uL14 (122 aa).

It belongs to the universal ribosomal protein uL14 family. In terms of assembly, part of the 50S ribosomal subunit. Forms a cluster with proteins L3 and L19. In the 70S ribosome, L14 and L19 interact and together make contacts with the 16S rRNA in bridges B5 and B8.

Its function is as follows. Binds to 23S rRNA. Forms part of two intersubunit bridges in the 70S ribosome. This is Large ribosomal subunit protein uL14 from Rickettsia massiliae (strain Mtu5).